Consider the following 125-residue polypeptide: UPF0251 protein DSY3441 (125 aa).

The protein belongs to the UPF0251 family.

In Desulfitobacterium hafniense (strain Y51), this protein is UPF0251 protein DSY3441.